Here is a 556-residue protein sequence, read N- to C-terminus: 2-isopropylmalate synthase (556 aa).

One can recognise a Pyruvate carboxyltransferase domain in the interval 33 to 307 (PIWLSSDLRD…DPQLDFSDID (275 aa)). Positions 42, 246, 248, and 282 each coordinate Mg(2+). The interval 439–556 (ATAPYTLKGH…ALHQAQEAAA (118 aa)) is regulatory domain.

The protein belongs to the alpha-IPM synthase/homocitrate synthase family. LeuA type 2 subfamily. Homodimer. Mg(2+) is required as a cofactor.

The protein resides in the cytoplasm. The enzyme catalyses 3-methyl-2-oxobutanoate + acetyl-CoA + H2O = (2S)-2-isopropylmalate + CoA + H(+). The protein operates within amino-acid biosynthesis; L-leucine biosynthesis; L-leucine from 3-methyl-2-oxobutanoate: step 1/4. Its function is as follows. Catalyzes the condensation of the acetyl group of acetyl-CoA with 3-methyl-2-oxobutanoate (2-ketoisovalerate) to form 3-carboxy-3-hydroxy-4-methylpentanoate (2-isopropylmalate). This chain is 2-isopropylmalate synthase, found in Stutzerimonas stutzeri (strain A1501) (Pseudomonas stutzeri).